The following is a 103-amino-acid chain: Small ribosomal subunit protein uS14c (103 aa).

The interval 34–56 (KVSPLSLSEKTKMREKLQSLPRN) is disordered.

It belongs to the universal ribosomal protein uS14 family. Part of the 30S ribosomal subunit.

It localises to the plastid. It is found in the chloroplast. Binds 16S rRNA, required for the assembly of 30S particles. In Triticum aestivum (Wheat), this protein is Small ribosomal subunit protein uS14c.